Consider the following 320-residue polypeptide: o-succinylbenzoate synthase (320 aa).

Lys-133 functions as the Proton donor in the catalytic mechanism. Positions 161, 190, and 213 each coordinate Mg(2+). Catalysis depends on Lys-235, which acts as the Proton acceptor.

It belongs to the mandelate racemase/muconate lactonizing enzyme family. MenC type 1 subfamily. It depends on a divalent metal cation as a cofactor.

It carries out the reaction (1R,6R)-6-hydroxy-2-succinyl-cyclohexa-2,4-diene-1-carboxylate = 2-succinylbenzoate + H2O. The protein operates within quinol/quinone metabolism; 1,4-dihydroxy-2-naphthoate biosynthesis; 1,4-dihydroxy-2-naphthoate from chorismate: step 4/7. It functions in the pathway quinol/quinone metabolism; menaquinone biosynthesis. In terms of biological role, converts 2-succinyl-6-hydroxy-2,4-cyclohexadiene-1-carboxylate (SHCHC) to 2-succinylbenzoate (OSB). The protein is o-succinylbenzoate synthase of Escherichia coli (strain SMS-3-5 / SECEC).